The sequence spans 665 residues: Dual specificity protein phosphatase 16 (665 aa).

A Rhodanese domain is found at 22–137; that stretch reads GTEKVLLIDS…FSRCFPGLCE (116 aa). At lysine 55 the chain carries (Microbial infection) N6-acetyllysine; by EIS. The Tyrosine-protein phosphatase domain maps to 158–300; that stretch reads GPTRILPNLY…LLDYEKKIKN (143 aa). The active-site Phosphocysteine intermediate is cysteine 244. Residues 321–368 form a disordered region; sequence EPVPAVSEGGQKSETPLSPPCADSATSEAAGQRPVHPASVPSVPSVQP. Over residues 354–368 the composition is skewed to low complexity; it reads PVHPASVPSVPSVQP. Serine 446 is subject to Phosphoserine; by MAPK1. Composition is skewed to polar residues over residues 449 to 458 and 487 to 499; these read QELSEQTPET and VRTS…QRSL. 2 disordered regions span residues 449–505 and 597–665; these read QELS…PLHR and VRRR…IEVS. Serine 501 is subject to Phosphoserine. The span at 602 to 622 shows a compositional bias: basic and acidic residues; sequence KPSDRADSRRSWHEESPFEKQ.

It belongs to the protein-tyrosine phosphatase family. Non-receptor class dual specificity subfamily. Interacts with ARRB2. Phosphorylated at Ser-446 by MAPK1/ERK2, which prevents its degradation, and thereby stabilizes it and blocks JNK MAPK activity. In terms of processing, (Microbial infection) Acetylated at Lys-55 by the M.tuberculosis Eis protein; this leads to the inhibition of JNK-dependent autophagy, phagosome maturation, and ROS (reactive oxygen species) generation for enhanced intracellular survival of M.tuberculosis.

Its subcellular location is the cytoplasm. The protein localises to the nucleus. It is found in the cytoplasmic vesicle. The catalysed reaction is O-phospho-L-tyrosyl-[protein] + H2O = L-tyrosyl-[protein] + phosphate. It carries out the reaction O-phospho-L-seryl-[protein] + H2O = L-seryl-[protein] + phosphate. It catalyses the reaction O-phospho-L-threonyl-[protein] + H2O = L-threonyl-[protein] + phosphate. Dual specificity protein phosphatase involved in the inactivation of MAP kinases. Dephosphorylates MAPK10 bound to ARRB2. The sequence is that of Dual specificity protein phosphatase 16 (DUSP16) from Homo sapiens (Human).